Reading from the N-terminus, the 255-residue chain is Small ribosomal subunit protein eS1B (255 aa).

Residue Ala-2 is modified to N-acetylalanine; partial. Phosphoserine is present on Ser-245. A Glycyl lysine isopeptide (Lys-Gly) (interchain with G-Cter in ubiquitin) cross-link involves residue Lys-248. Phosphothreonine is present on Thr-254.

It belongs to the eukaryotic ribosomal protein eS1 family. Component of the small ribosomal subunit. Mature ribosomes consist of a small (40S) and a large (60S) subunit. The 40S subunit contains about 33 different proteins and 1 molecule of RNA (18S). The 60S subunit contains about 49 different proteins and 3 molecules of RNA (25S, 5.8S and 5S).

The protein localises to the cytoplasm. The sequence is that of Small ribosomal subunit protein eS1B from Saccharomyces cerevisiae (strain RM11-1a) (Baker's yeast).